Here is a 333-residue protein sequence, read N- to C-terminus: MATARPSSCGRDSVPATPRASIDVSLVVVVHGGGASNISPGRKELVSEGIAKAATEGYNILKAGGSAVDAVEGAVTMLENDPEFNAGYGSVLNADGDIEMDASIMDGKDLSAGAVSAVRCIANPVKLARLVMEKTPHCFLTGRGAEKFAADMGIPQTPAEKLITERTKKHLEKEKLEKGAQKADCPKNSGTVGAVALDCKGNLAYATSTGGIVNKMVGRVGDSPCIGAGGYADNNLGAVSTTGHGESILKVNLARLALFHVEQGKTVDEAATLALDYMKSKLKGLGGLILINKTGDWVAKWTSASMPWAAVKNGKLQAGIDLCETKTRNLPTC.

Thr191 serves as the catalytic Nucleophile. Substrate contacts are provided by residues 219 to 222 (RVGD) and 242 to 245 (TGHG).

The protein belongs to the Ntn-hydrolase family. In terms of assembly, heterodimer of an alpha and beta chain produced by autocleavage. This heterodimer may then dimerize in turn, giving rise to a heterotetramer. In terms of processing, cleaved into an alpha and beta chain by autocatalysis; this activates the enzyme. The N-terminal residue of the beta subunit is responsible for the nucleophile hydrolase activity. As to expression, present in testis, brain, liver, kidney, heart and skeletal muscle. In brain, specifically present in the astrocytic lineage. Present in sperm (at protein level).

The protein localises to the cytoplasm. The catalysed reaction is L-asparagine + H2O = L-aspartate + NH4(+). The enzyme catalyses Cleavage of a beta-linked Asp residue from the N-terminus of a polypeptide.. In terms of biological role, has both L-asparaginase and beta-aspartyl peptidase activity. Is highly active with L-Asp beta-methyl ester. Besides, has catalytic activity toward beta-aspartyl dipeptides and their methyl esters, including beta-L-Asp-L-Phe, beta-L-Asp-L-Phe methyl ester (aspartame), beta-L-Asp-L-Ala, beta-L-Asp-L-Leu and beta-L-Asp-L-Lys. Does not have aspartylglucosaminidase activity and is inactive toward GlcNAc-L-Asn. Likewise, has no activity toward glutamine. May be involved in the production of L-aspartate, which can act as an excitatory neurotransmitter in some brain regions. In Rattus norvegicus (Rat), this protein is Isoaspartyl peptidase/L-asparaginase (Asrgl1).